Consider the following 119-residue polypeptide: Large ribosomal subunit protein bL20 (119 aa).

This sequence belongs to the bacterial ribosomal protein bL20 family.

Binds directly to 23S ribosomal RNA and is necessary for the in vitro assembly process of the 50S ribosomal subunit. It is not involved in the protein synthesizing functions of that subunit. The sequence is that of Large ribosomal subunit protein bL20 from Dehalococcoides mccartyi (strain ATCC BAA-2100 / JCM 16839 / KCTC 5957 / BAV1).